A 256-amino-acid chain; its full sequence is Acetyl-coenzyme A carboxylase carboxyl transferase subunit alpha (256 aa).

Residues 1 to 236 (MSDVARILKE…KTAIVDELAE (236 aa)) form the CoA carboxyltransferase C-terminal domain.

The protein belongs to the AccA family. As to quaternary structure, acetyl-CoA carboxylase is a heterohexamer composed of biotin carboxyl carrier protein (AccB), biotin carboxylase (AccC) and two subunits each of ACCase subunit alpha (AccA) and ACCase subunit beta (AccD).

It localises to the cytoplasm. It carries out the reaction N(6)-carboxybiotinyl-L-lysyl-[protein] + acetyl-CoA = N(6)-biotinyl-L-lysyl-[protein] + malonyl-CoA. It functions in the pathway lipid metabolism; malonyl-CoA biosynthesis; malonyl-CoA from acetyl-CoA: step 1/1. In terms of biological role, component of the acetyl coenzyme A carboxylase (ACC) complex. First, biotin carboxylase catalyzes the carboxylation of biotin on its carrier protein (BCCP) and then the CO(2) group is transferred by the carboxyltransferase to acetyl-CoA to form malonyl-CoA. This is Acetyl-coenzyme A carboxylase carboxyl transferase subunit alpha from Streptococcus thermophilus (strain CNRZ 1066).